A 128-amino-acid polypeptide reads, in one-letter code: Secreted RxLR effector protein 57 (128 aa).

An N-terminal signal peptide occupies residues 1 to 31 (MHRKRLRVVLSATLLDLITCVQLMLDPLVRS). The short motif at 58–61 (RILR) is the RxLR element.

The protein belongs to the RxLR effector family.

It localises to the secreted. It is found in the host nucleus. Its subcellular location is the host cytoplasm. Functionally, secreted effector that completely suppresses the host cell death induced by cell death-inducing proteins. This Plasmopara viticola (Downy mildew of grapevine) protein is Secreted RxLR effector protein 57.